The following is a 179-amino-acid chain: MSDEINKTQLKNIINAILEYKRVLVYRNEINGDIDNSYVLFYNEIDSNFDILTIPFVIENLREEKEFLKFLYESELFDIDNLSKLIVDFIDYKHRPCLLKGLVYVELLDLIKQYNYQITENNINFNKNRFTGEIRYIISIDSNKTAEIIKKIEYCNFCLYDRDINVGIQKCVTYKLKYS.

This is an uncharacterized protein from Sulfolobus islandicus rod-shaped virus 1 (SIRV-1).